The sequence spans 533 residues: uncharacterized protein (533 aa).

The segment at 1–26 is disordered; it reads MKRFFSKLFSKSPTSGRVPSPDSDYS. Phosphoserine is present on residues Ser20 and Ser23. Residue Tyr25 is modified to Phosphotyrosine. Ser26 bears the Phosphoserine mark. The next 10 helical transmembrane spans lie at 178–198, 213–230, 242–264, 274–296, 313–333, 353–373, 394–414, 435–455, 466–486, and 495–515; these read ILAVLHIPVALIWLNLEHILI, YMRVFILAAPGYAVFEAL, PITYVLCFAAPLNILLNYLLVWH, APVAVATTFWFQSICLILYICFS, LSPMLHFSFHGMLMIVTEWAA, SILLTSTSLLFQIPFAFAVAS, RVAYSLALCISIFDGSLIFCF, IFPILSLFIVTDGLNAVGGGL, GLISIGSSYLFALPVTVFVVV, and IWCGMILSSVTAITCQFTVLF.

This sequence belongs to the multi antimicrobial extrusion (MATE) (TC 2.A.66.1) family.

The protein resides in the vacuole membrane. This is an uncharacterized protein from Schizosaccharomyces pombe (strain 972 / ATCC 24843) (Fission yeast).